We begin with the raw amino-acid sequence, 143 residues long: Hemoglobin subunit alpha (143 aa).

Serine 2 carries the post-translational modification N-acetylserine. One can recognise a Globin domain in the interval 2 to 143; the sequence is SLSDKDKSAV…VALALAEKYR (142 aa). An O2-binding site is contributed by histidine 60. Histidine 89 contributes to the heme b binding site.

It belongs to the globin family. In terms of assembly, heterotetramer of two alpha chains and two beta chains. As to expression, red blood cells.

Its function is as follows. Involved in oxygen transport from gills to the various peripheral tissues. The chain is Hemoglobin subunit alpha (hba) from Pogonophryne scotti (Saddleback plunderfish).